A 468-amino-acid chain; its full sequence is Cyclin-dependent kinase 14 (468 aa).

Phosphoserine occurs at positions 24, 77, and 94. The segment at 102–131 (FKSSSAGKESPKVRRHSSPSSPTSPKFGKA) is disordered. S133 is subject to Phosphoserine. The Protein kinase domain maps to 134-418 (YEKLEKLGEG…AQAALSHEYF (285 aa)). ATP-binding positions include 140 to 148 (LGEGSYATV) and K163. The Proton acceptor role is filled by D255. Positions 448–468 (ESMRAFGKNSSYGKSLSNSKH) are disordered. The segment covering 455–468 (KNSSYGKSLSNSKH) has biased composition (polar residues).

It belongs to the protein kinase superfamily. CMGC Ser/Thr protein kinase family. CDC2/CDKX subfamily. Found in a complex with LRP6, CCNY and CAPRIN2 during G2/M stage; CAPRIN2 functions as a scaffold for the complex by binding to CCNY via its N terminus and to CDK14 via its C terminus. Interacts with CCNY; CCNY mediates its recruitment to the plasma membrane and promotes phosphorylation of LRP6. Interacts with CCDN3 and CDKN1A. Interacts with SEPT8. Interacts with 14-3-3 proteina YWHAB, YWHAE, YWHAH and YWHAQ.

Its subcellular location is the cell membrane. The protein resides in the cytoplasm. It is found in the nucleus. It catalyses the reaction L-seryl-[protein] + ATP = O-phospho-L-seryl-[protein] + ADP + H(+). The catalysed reaction is L-threonyl-[protein] + ATP = O-phospho-L-threonyl-[protein] + ADP + H(+). Its activity is regulated as follows. Serine/threonine-protein kinase activity is promoted by associated cyclins CCDN3 and CCNY and repressed by CDKN1A. Its function is as follows. Serine/threonine-protein kinase involved in the control of the eukaryotic cell cycle, whose activity is controlled by an associated cyclin. Acts as a cell-cycle regulator of Wnt signaling pathway during G2/M phase by mediating the phosphorylation of LRP6 at 'Ser-1490', leading to the activation of the Wnt signaling pathway. Acts as a regulator of cell cycle progression and cell proliferation via its interaction with CCDN3. Phosphorylates RB1 in vitro, however the relevance of such result remains to be confirmed in vivo. May also play a role in meiosis, neuron differentiation and may indirectly act as a negative regulator of insulin-responsive glucose transport. The chain is Cyclin-dependent kinase 14 (CDK14) from Oryctolagus cuniculus (Rabbit).